Here is a 274-residue protein sequence, read N- to C-terminus: Copper chaperone for superoxide dismutase (274 aa).

One can recognise an HMA domain in the interval 11–74 (ACMLEFAVQM…LLEDTGRQAV (64 aa)). Cu cation-binding residues include C22 and C25. K76 is covalently cross-linked (Glycyl lysine isopeptide (Lys-Gly) (interchain with G-Cter in ubiquitin)). The tract at residues 88 to 234 (AAVAILGGSG…LACGIIARSA (147 aa)) is superoxide dismutase-like. A disulfide bridge connects residues C141 and C227. 4 residues coordinate Zn(2+): H147, H155, H164, and D167. Residues K189, K216, and K241 each participate in a glycyl lysine isopeptide (Lys-Gly) (interchain with G-Cter in ubiquitin) cross-link. Cu cation is bound by residues C244 and C246.

In the C-terminal section; belongs to the Cu-Zn superoxide dismutase family. As to quaternary structure, homodimer, and heterodimer with SOD1. Interacts with COMMD1. Interacts with XIAP/BIRC4. Interacts with SLC31A1(via C-terminal domain); this interaction is Cu(1+)-mediated. The heterodimer CCS:SOD1 interacts with SLC31A1; this heterotrimer is Cu(1+)-mediated and its maintenance is regulated through SOD1 activation. It depends on Cu(2+) as a cofactor. Requires Zn(2+) as cofactor. Post-translationally, ubiquitinion by XIAP/BIRC4 leads to enhancement of its chaperone activity toward its physiologic target, SOD1, rather than proteasomal degradation. XIAP/BIRC4 preferentially ubiquitinates at Lys-241.

The protein resides in the cytoplasm. In terms of biological role, delivers copper to copper zinc superoxide dismutase (SOD1). This Sus scrofa (Pig) protein is Copper chaperone for superoxide dismutase.